The chain runs to 210 residues: HTH-type transcriptional repressor FabR (210 aa).

Positions 10–70 constitute an HTH tetR-type domain; that stretch reads KTRRSLVEAA…TMVDESGLML (61 aa). Residues 33–52 constitute a DNA-binding region (H-T-H motif); the sequence is SLREVAREAGIAPTSFYRHF.

In terms of assembly, homodimer.

It is found in the cytoplasm. Its function is as follows. Represses the transcription of fabB, involved in unsaturated fatty acid (UFA) biosynthesis. By controlling UFA production, FabR directly influences the physical properties of the membrane bilayer. The protein is HTH-type transcriptional repressor FabR of Salmonella choleraesuis (strain SC-B67).